We begin with the raw amino-acid sequence, 977 residues long: MKPSIAEMLHRGRMLWIILLSTIALGWTTPIPLIEDSEEIDEPCFDPCYCEVKESLFHIHCDSKGFTNISQITEFWSRPFKLYLQRNSMRKLYTNSFLHLNNAVSINLGNNALQDIQTGAFNGLKILKRLYLHENKLDVFRNDTFLGLESLEYLQADYNVIKRIESGAFRNLSKLRVLILNDNLIPMLPTNLFKAVSLTHLDLRGNRLKVLFYRGMLDHIGRSLMELQLEENPWNCTCEIVQLKSWLERIPYTALVGDITCETPFHFHGKDLREIRKTELCPLLSDSEVEASLGIPHSSSSKENAWPTKPSSMLSSVHFTASSVEYKSSNKQPKPTKQPRTPRPPSTSQALYPGPNQPPIAPYQTRPPIPIICPTGCTCNLHINDLGLTVNCKERGFNNISELLPRPLNAKKLYLSSNLIQKIYRSDFWNFSSLDLLHLGNNRISYVQDGAFINLPNLKSLFLNGNDIEKLTPGMFRGLQSLHYLYFEFNVIREIQPAAFSLMPNLKLLFLNNNLLRTLPTDAFAGTSLARLNLRKNYFLYLPVAGVLEHLNAIVQIDLNENPWDCTCDLVPFKQWIETISSVSVVGDVLCRSPENLTHRDVRTIELEVLCPEMLHVAPAGESPAQPGDSHLIGAPTSASPYEFSPPGGPVPLSVLILSLLVLFFSAVFVAAGLFAYVLRRRRKKLPFRSKRQEGVDLTGIQMQCHRLFEDGGGGGGGSGGGGRPTLSSPEKAPPVGHVYEYIPHPVTQMCNNPIYKPREEEEVAVSSAQEAGSAERGGPGTQPPGMGEALLGSEQFAETPKENHSNYRTLLEKEKEWALAVSSSQLNTIVTVNHHHPHHPAVGGVSGVVGGTGGDLAGFRHHEKNGGVVLFPPGGGCGSGSMLLDRERPQPAPCTVGFVDCLYGTVPKLKELHVHPPGMQYPDLQQDARLKETLLFSAGKGFTDHQTQKSDYLELRAKLQTKPDYLEVLEKTTYRF.

A signal peptide spans 1–26 (MKPSIAEMLHRGRMLWIILLSTIALG). Residues 29-654 (TPIPLIEDSE…SPPGGPVPLS (626 aa)) lie on the Extracellular side of the membrane. N68 carries N-linked (GlcNAc...) asparagine glycosylation. 6 LRR repeats span residues 78 to 99 (RPFK…SFLH), 102 to 123 (NAVS…AFNG), 126 to 147 (ILKR…TFLG), 150 to 171 (SLEY…AFRN), 174 to 195 (KLRV…LFKA), and 197 to 218 (SLTH…GMLD). Positions 232–283 (NPWNCTCEIVQLKSWLERIPYTALVGDITCETPFHFHGKDLREIRKTELCPL) constitute an LRRCT 1 domain. The segment at 325 to 360 (EYKSSNKQPKPTKQPRTPRPPSTSQALYPGPNQPPI) is disordered. Residues 364–406 (QTRPPIPIICPTGCTCNLHINDLGLTVNCKERGFNNISELLPR) enclose the LRRNT domain. LRR repeat units follow at residues 409-430 (NAKK…DFWN), 433-454 (SLDL…AFIN), 457-478 (NLKS…MFRG), 481-502 (SLHY…AFSL), 505-526 (NLKL…AFAG), and 528-549 (SLAR…GVLE). In terms of domain architecture, LRRCT 2 spans 562–613 (NPWDCTCDLVPFKQWIETISSVSVVGDVLCRSPENLTHRDVRTIELEVLCPE). A glycan (N-linked (GlcNAc...) asparagine) is linked at N596. The chain crosses the membrane as a helical span at residues 655 to 675 (VLILSLLVLFFSAVFVAAGLF). Residues 676–977 (AYVLRRRRKK…EVLEKTTYRF (302 aa)) are Cytoplasmic-facing. Disordered stretches follow at residues 708-735 (LFED…KAPP) and 761-790 (EEEV…MGEA). Residues 711–724 (DGGGGGGGSGGGGR) are compositionally biased toward gly residues. A compositionally biased stretch (low complexity) spans 765-775 (AVSSAQEAGSA).

This sequence belongs to the SLITRK family. Expressed in the occipital lobe of the cerebral cortex of the brain. Expressed at higher levels in some astrocytic brain tumors such as astrocytomas, oligodendrogliomas, glioblastomas, gangliogliomas and primitive neuroectodermal tumors.

The protein localises to the membrane. Functionally, suppresses neurite outgrowth. This chain is SLIT and NTRK-like protein 3 (SLITRK3), found in Homo sapiens (Human).